The sequence spans 269 residues: Phosphate import ATP-binding protein PstB (269 aa).

One can recognise an ABC transporter domain in the interval 22-264 (IKVKNVDFFY…PANKKTEDYI (243 aa)). Residue 55 to 62 (GSSGSGKS) coordinates ATP.

The protein belongs to the ABC transporter superfamily. Phosphate importer (TC 3.A.1.7) family. As to quaternary structure, the complex is composed of two ATP-binding proteins (PstB), two transmembrane proteins (PstC and PstA) and a solute-binding protein (PstS).

It localises to the cell membrane. It catalyses the reaction phosphate(out) + ATP + H2O = ADP + 2 phosphate(in) + H(+). In terms of biological role, part of the ABC transporter complex PstSACB involved in phosphate import. Responsible for energy coupling to the transport system. The chain is Phosphate import ATP-binding protein PstB from Spiroplasma kunkelii.